A 365-amino-acid chain; its full sequence is Ribosomal RNA large subunit methyltransferase F (365 aa).

Residues 1-50 (MSKPAVKSVPSATAKTATRAANPRQKAKAPKQAKPEGKGRAKPSKDKPRA) form a disordered region. Basic and acidic residues predominate over residues 33 to 50 (AKPEGKGRAKPSKDKPRA).

The protein belongs to the methyltransferase superfamily. METTL16/RlmF family.

It localises to the cytoplasm. It catalyses the reaction adenosine(1618) in 23S rRNA + S-adenosyl-L-methionine = N(6)-methyladenosine(1618) in 23S rRNA + S-adenosyl-L-homocysteine + H(+). Specifically methylates the adenine in position 1618 of 23S rRNA. The sequence is that of Ribosomal RNA large subunit methyltransferase F from Shewanella baltica (strain OS195).